Reading from the N-terminus, the 328-residue chain is D-cysteine desulfhydrase (328 aa).

K51 is modified (N6-(pyridoxal phosphate)lysine).

It belongs to the ACC deaminase/D-cysteine desulfhydrase family. In terms of assembly, homodimer. It depends on pyridoxal 5'-phosphate as a cofactor.

It carries out the reaction D-cysteine + H2O = hydrogen sulfide + pyruvate + NH4(+) + H(+). Catalyzes the alpha,beta-elimination reaction of D-cysteine and of several D-cysteine derivatives. It could be a defense mechanism against D-cysteine. This chain is D-cysteine desulfhydrase, found in Salmonella typhimurium (strain LT2 / SGSC1412 / ATCC 700720).